A 239-amino-acid polypeptide reads, in one-letter code: Isopentenyl-diphosphate Delta-isomerase (239 aa).

Lysine 43 serves as a coordination point for substrate. Residues histidine 47 and histidine 58 each contribute to the Mg(2+) site. A Nudix hydrolase domain is found at 56–210 (LLHRAFSIFL…KVKVTPWFRL (155 aa)). Residues arginine 77 and lysine 81 each contribute to the substrate site. The active site involves cysteine 93. Residue serine 94 coordinates substrate. Mg(2+) contacts are provided by glutamate 156 and glutamate 158. Glutamate 158 is an active-site residue.

This sequence belongs to the IPP isomerase type 1 family. The cofactor is Mg(2+).

The catalysed reaction is isopentenyl diphosphate = dimethylallyl diphosphate. Its pathway is isoprenoid biosynthesis; dimethylallyl diphosphate biosynthesis; dimethylallyl diphosphate from isopentenyl diphosphate: step 1/1. Catalyzes the 1,3-allylic rearrangement of the homoallylic substrate isopentenyl (IPP) to its highly electrophilic allylic isomer, dimethylallyl diphosphate (DMAPP). The chain is Isopentenyl-diphosphate Delta-isomerase (ipi) from Dictyostelium discoideum (Social amoeba).